The sequence spans 261 residues: MLIVLSPAKSLDYETPPRVKSHTLPRFIDRSATLIERLRKLAPQDVASLMDISDKLAVLNVTRYADWSPEFTAANSKQAVLAFNGDVYDGLDAKTLSTDDLAFAQKHIRILSGLYGVLRPMDWMQPYRLEMGTRLDNAAGKDLYAFWGDDVTALINKDMAELKHEGSLTLVNLASEEYFKVVRPKVLAARVITPVFEDWKGGRYKIISFHAKRARGTMARYAVTHRVTDPAQLKRFNEDGYAFDKAASDDARWVFRRRLED.

This sequence belongs to the UPF0246 family.

The chain is UPF0246 protein Rmet_0978 from Cupriavidus metallidurans (strain ATCC 43123 / DSM 2839 / NBRC 102507 / CH34) (Ralstonia metallidurans).